Here is a 74-residue protein sequence, read N- to C-terminus: Ribosome modulation factor (74 aa).

The protein belongs to the ribosome modulation factor family.

Its subcellular location is the cytoplasm. During stationary phase, converts 70S ribosomes to an inactive dimeric form (100S ribosomes). The polypeptide is Ribosome modulation factor (Cellvibrio japonicus (strain Ueda107) (Pseudomonas fluorescens subsp. cellulosa)).